The following is a 506-amino-acid chain: Bone morphogenetic protein 6 (506 aa).

Residues 1-20 (MPGLGRRAQWLCWWWGLLCS) form the signal peptide. Positions 21 to 367 (CGPPPLRPPL…VSEVHVRTTR (347 aa)) are excised as a propeptide. Disordered regions lie at residues 44-64 (AGGS…SGFL), 87-125 (PHRP…RLKS), and 139-195 (KDDE…PLTS). The span at 96 to 112 (LQQPQSPVLPQQQQSQQ) shows a compositional bias: low complexity. Acidic residues predominate over residues 140–153 (DDEEDGVSEGEGLE). N-linked (GlcNAc...) asparagine glycans are attached at residues Asn-234, Asn-262, Asn-379, Asn-397, and Asn-447. The tract at residues 366–397 (TRSASSRRRQQSRNRSTQSQDVSRGSSASDYN) is disordered. Residues 386 to 397 (DVSRGSSASDYN) show a composition bias toward polar residues. Intrachain disulfides connect Cys-405–Cys-471, Cys-434–Cys-503, and Cys-438–Cys-505.

Belongs to the TGF-beta family. In terms of assembly, interacts with SOSTDC1. Interacts (when glycosylated) with type I receptor ACVR1; the interaction may induce HAMP expression. Interacts with type II receptor ACVR2B. Interacts with Hemojuvelin/HJV. Interacts with ERFE; the interaction inhibits BMP-induced transcription of HAMP. Interacts with BMPR1A/ALK3. Forms heterodimers with BMP2 in vitro; the heterodimer then binds to its receptor BMPR1A /ALK3 and may induce HAMP expression.

Its subcellular location is the secreted. In terms of biological role, growth factor of the TGF-beta superfamily that plays essential roles in many developmental processes including cartilage and bone formation. Also plays an important role in the regulation of HAMP/hepcidin expression and iron metabolism by acting as a ligand for hemojuvelin/HJV. Also acts to promote expression of HAMP, potentially via the interaction with its receptor BMPR1A/ALK3. Initiates the canonical BMP signaling cascade by associating with type I receptor ACVR1 and type II receptor ACVR2B. In turn, ACVR1 propagates signal by phosphorylating SMAD1/5/8 that travel to the nucleus and act as activators and repressors of transcription of target. Can also signal through non-canonical pathway such as TAZ-Hippo signaling cascade to modulate VEGF signaling by regulating VEGFR2 expression. In Rattus norvegicus (Rat), this protein is Bone morphogenetic protein 6 (Bmp6).